A 599-amino-acid polypeptide reads, in one-letter code: DNA mismatch repair protein MutL (599 aa).

This sequence belongs to the DNA mismatch repair MutL/HexB family.

This protein is involved in the repair of mismatches in DNA. It is required for dam-dependent methyl-directed DNA mismatch repair. May act as a 'molecular matchmaker', a protein that promotes the formation of a stable complex between two or more DNA-binding proteins in an ATP-dependent manner without itself being part of a final effector complex. This chain is DNA mismatch repair protein MutL, found in Rhodopseudomonas palustris (strain BisB18).